Here is a 256-residue protein sequence, read N- to C-terminus: Deoxyribose-phosphate aldolase (256 aa).

Asp-102 acts as the Proton donor/acceptor in catalysis. Lys-165 functions as the Schiff-base intermediate with acetaldehyde in the catalytic mechanism. Lys-197 acts as the Proton donor/acceptor in catalysis.

It belongs to the DeoC/FbaB aldolase family. DeoC type 2 subfamily.

It is found in the cytoplasm. The enzyme catalyses 2-deoxy-D-ribose 5-phosphate = D-glyceraldehyde 3-phosphate + acetaldehyde. It participates in carbohydrate degradation; 2-deoxy-D-ribose 1-phosphate degradation; D-glyceraldehyde 3-phosphate and acetaldehyde from 2-deoxy-alpha-D-ribose 1-phosphate: step 2/2. Its function is as follows. Catalyzes a reversible aldol reaction between acetaldehyde and D-glyceraldehyde 3-phosphate to generate 2-deoxy-D-ribose 5-phosphate. In Shewanella baltica (strain OS223), this protein is Deoxyribose-phosphate aldolase.